Here is a 345-residue protein sequence, read N- to C-terminus: S-adenosylmethionine:tRNA ribosyltransferase-isomerase (345 aa).

It belongs to the QueA family. In terms of assembly, monomer.

It is found in the cytoplasm. The catalysed reaction is 7-aminomethyl-7-carbaguanosine(34) in tRNA + S-adenosyl-L-methionine = epoxyqueuosine(34) in tRNA + adenine + L-methionine + 2 H(+). The protein operates within tRNA modification; tRNA-queuosine biosynthesis. Functionally, transfers and isomerizes the ribose moiety from AdoMet to the 7-aminomethyl group of 7-deazaguanine (preQ1-tRNA) to give epoxyqueuosine (oQ-tRNA). This is S-adenosylmethionine:tRNA ribosyltransferase-isomerase from Anaeromyxobacter dehalogenans (strain 2CP-C).